Here is a 565-residue protein sequence, read N- to C-terminus: Urocanate hydratase (565 aa).

NAD(+) is bound by residues 61 to 62, glutamine 139, 185 to 187, glutamate 205, arginine 210, 251 to 252, 272 to 276, 282 to 283, and tyrosine 331; these read GG, GMG, NA, QTSAH, and YL. The active site involves cysteine 419. Residues 453–472 form a disordered region; that stretch reads LDSGSVASPNRETESMRDGS. The segment covering 463–472 has biased composition (basic and acidic residues); that stretch reads RETESMRDGS. Residue glycine 501 coordinates NAD(+).

The protein belongs to the urocanase family. Requires NAD(+) as cofactor.

The protein localises to the cytoplasm. The catalysed reaction is 4-imidazolone-5-propanoate = trans-urocanate + H2O. It functions in the pathway amino-acid degradation; L-histidine degradation into L-glutamate; N-formimidoyl-L-glutamate from L-histidine: step 2/3. Catalyzes the conversion of urocanate to 4-imidazolone-5-propionate. This Pseudomonas syringae pv. tomato (strain ATCC BAA-871 / DC3000) protein is Urocanate hydratase.